A 173-amino-acid polypeptide reads, in one-letter code: Monothiol glutaredoxin-S14, chloroplastic (173 aa).

Residues 1-63 (MALRSVKTPT…KLKPTKFRCS (63 aa)) constitute a chloroplast transit peptide. A Glutaredoxin domain is found at 72–173 (KDTLEKLVNS…QEEVEKAMCS (102 aa)). Position 89 (lysine 89) interacts with glutathione. [2Fe-2S] cluster contacts are provided by cysteine 97 and phenylalanine 99. Cysteine 97 carries the S-glutathionyl cysteine modification. Positions 97 to 100 (CGFS) are required for CAX1 activation. Glutathione is bound by residues arginine 126 and lysine 130. The interval 133–137 (SNWPT) is required for CAX1 activation. Residues phenylalanine 138 and 151 to 152 (CD) each bind glutathione.

It belongs to the glutaredoxin family. CGFS subfamily. In terms of assembly, [2Fe-2S]-bridged holo-homodimer. Interacts with N-terminal part of CAX1 in yeast. Interacts in vitro with SUFE1, BOLA1, BOLA2 and BOLA4. Interacts in vivo only with SUFE1, BOLA1 and BOLA4. Interacts with SBP1. Highly expressed in leaves, at intermediate levels in stems and at lower levels in roots and flowers.

Its subcellular location is the plastid. The protein localises to the chloroplast. Functionally, may only reduce GSH-thiol disulfides, but not protein disulfides (Potential). Probably involved in the regulation of the redox state of the BOLA proteins (Potential). May act as Fe-S cluster donors to Fe-S cluster-requiring proteins. May protect cells against protein oxidative damage. May regulate CAX cation transporters. The GRXS14-BOLA1 heterodimer binds a labile, oxygen sensitive Fe-S cluster. The polypeptide is Monothiol glutaredoxin-S14, chloroplastic (Arabidopsis thaliana (Mouse-ear cress)).